The chain runs to 284 residues: Bifunctional protein FolD (284 aa).

Residues 165-167 (GRS) and Ser-190 each bind NADP(+).

The protein belongs to the tetrahydrofolate dehydrogenase/cyclohydrolase family. Homodimer.

It catalyses the reaction (6R)-5,10-methylene-5,6,7,8-tetrahydrofolate + NADP(+) = (6R)-5,10-methenyltetrahydrofolate + NADPH. The catalysed reaction is (6R)-5,10-methenyltetrahydrofolate + H2O = (6R)-10-formyltetrahydrofolate + H(+). Its pathway is one-carbon metabolism; tetrahydrofolate interconversion. Its function is as follows. Catalyzes the oxidation of 5,10-methylenetetrahydrofolate to 5,10-methenyltetrahydrofolate and then the hydrolysis of 5,10-methenyltetrahydrofolate to 10-formyltetrahydrofolate. The chain is Bifunctional protein FolD from Streptococcus equi subsp. equi (strain 4047).